The primary structure comprises 312 residues: Small ribosomal subunit protein uS2m (312 aa).

It belongs to the universal ribosomal protein uS2 family.

The protein localises to the mitochondrion. In Acanthamoeba castellanii (Amoeba), this protein is Small ribosomal subunit protein uS2m (RPS2).